The following is an 85-amino-acid chain: Putative membrane protein insertion efficiency factor (85 aa).

Belongs to the UPF0161 family.

The protein resides in the cell membrane. Functionally, could be involved in insertion of integral membrane proteins into the membrane. Its function is as follows. Lyses fish blood cells. In Aeromonas hydrophila, this protein is Putative membrane protein insertion efficiency factor (hlyA).